The primary structure comprises 556 residues: Protein trichome birefringence-like 1 (556 aa).

The chain crosses the membrane as a helical; Signal-anchor for type II membrane protein span at residues Thr38–Pro58. Positions Gly269–Ser271 match the GDS motif motif. Residues Asp514–Asn528 carry the DCXHWCLPGXXDXWN motif motif.

It belongs to the PC-esterase family. TBL subfamily. As to expression, not expressed in trichomes.

The protein localises to the membrane. In terms of biological role, can complement TBR and is therefore functionally equivalent, but may work in different tissue. May act as a bridging protein that binds pectin and other cell wall polysaccharides. Probably involved in maintaining esterification of pectins. May be involved in the specific O-acetylation of cell wall polymers. The chain is Protein trichome birefringence-like 1 (TBL1) from Arabidopsis thaliana (Mouse-ear cress).